We begin with the raw amino-acid sequence, 371 residues long: Glycerol-3-phosphate dehydrogenase [NAD(+)] 2 (371 aa).

Residues 18–23 (GSGNWG), phenylalanine 50, and phenylalanine 106 each bind NAD(+). Substrate is bound at residue lysine 129. Alanine 162 serves as a coordination point for NAD(+). Residue lysine 222 is the Proton acceptor of the active site. Residues arginine 294 and glutamine 323 each contribute to the NAD(+) site. 294–295 (RN) contacts substrate.

It belongs to the NAD-dependent glycerol-3-phosphate dehydrogenase family. As to quaternary structure, interacts with human CFH/complement factor H; the interaction is direct and enables the pathogen to evade the host innate immune system. Interacts with human CFHR1/complement factor H-related protein 1; the interaction is direct. Interacts with human PLG/plasminogen; the interaction is direct and provides active plasmin on the surface of fungal cells.

Its subcellular location is the secreted. The protein localises to the cell wall. It is found in the cytoplasm. It localises to the peroxisome. It catalyses the reaction sn-glycerol 3-phosphate + NAD(+) = dihydroxyacetone phosphate + NADH + H(+). Its function is as follows. May catalyze the production and accumulation of glycerol during hyperosmotic stress conditions. Glycerol acts as a osmoregulator that prevents loss of water and turgor of the cells. Mediates evasion of the host innate immune system by binding inhibitory components of the host alternative complement system, in a manner dependent on estrogen-induced inhibition of EBP1. The sequence is that of Glycerol-3-phosphate dehydrogenase [NAD(+)] 2 from Candida albicans (strain SC5314 / ATCC MYA-2876) (Yeast).